The sequence spans 107 residues: Glutaredoxin-1 (107 aa).

Alanine 2 is subject to N-acetylalanine. The Glutaredoxin domain occupies 3 to 106; it reads QEFVNCKIQS…ARLKQIGALQ (104 aa). Lysine 9 carries the post-translational modification N6-succinyllysine. 2 disulfides stabilise this stretch: cysteine 23/cysteine 26 and cysteine 79/cysteine 83.

This sequence belongs to the glutaredoxin family.

The protein localises to the cytoplasm. Functionally, has a glutathione-disulfide oxidoreductase activity in the presence of NADPH and glutathione reductase. Reduces low molecular weight disulfides and proteins. The sequence is that of Glutaredoxin-1 (Glrx) from Rattus norvegicus (Rat).